The sequence spans 152 residues: Small ribosomal subunit protein uS15 (152 aa).

The segment covering 1 to 11 (MAKMHTKRKGK) has biased composition (basic residues). Residues 1–24 (MAKMHTKRKGKSSSTRPNRTEPPE) are disordered.

The protein belongs to the universal ribosomal protein uS15 family. As to quaternary structure, part of the 30S ribosomal subunit.

This Methanosarcina mazei (strain ATCC BAA-159 / DSM 3647 / Goe1 / Go1 / JCM 11833 / OCM 88) (Methanosarcina frisia) protein is Small ribosomal subunit protein uS15.